A 281-amino-acid polypeptide reads, in one-letter code: Elongation factor Ts (281 aa).

The segment at 80-83 (TDFV) is involved in Mg(2+) ion dislocation from EF-Tu.

This sequence belongs to the EF-Ts family.

Its subcellular location is the cytoplasm. Associates with the EF-Tu.GDP complex and induces the exchange of GDP to GTP. It remains bound to the aminoacyl-tRNA.EF-Tu.GTP complex up to the GTP hydrolysis stage on the ribosome. This is Elongation factor Ts from Aliivibrio fischeri (strain MJ11) (Vibrio fischeri).